Here is a 798-residue protein sequence, read N- to C-terminus: Integrin beta-5 (798 aa).

The N-terminal stretch at 1–23 (MPRVPATLYACLLGLCALVPRLA) is a signal peptide. The Extracellular segment spans residues 24 to 719 (GLNICTSGSA…REPECGSAPN (696 aa)). Residues 27 to 76 (ICTSGSATSCEECLLIHPKCAWCSKEYFGNPRSITSRCDLKANLIRNGCE) enclose the PSI domain. 19 disulfide bridges follow: cysteine 28–cysteine 46, cysteine 36–cysteine 463, cysteine 39–cysteine 64, cysteine 49–cysteine 75, cysteine 202–cysteine 211, cysteine 259–cysteine 300, cysteine 401–cysteine 413, cysteine 433–cysteine 461, cysteine 465–cysteine 484, cysteine 476–cysteine 487, cysteine 489–cysteine 498, cysteine 500–cysteine 530, cysteine 513–cysteine 528, cysteine 522–cysteine 533, cysteine 535–cysteine 548, cysteine 550–cysteine 571, cysteine 555–cysteine 569, cysteine 563–cysteine 574, and cysteine 576–cysteine 585. Positions 136 to 378 (YPVDLYYLMD…QLIINAYSSI (243 aa)) constitute a VWFA domain. 2 residues coordinate Mg(2+): serine 147 and serine 149. Residues serine 149, aspartate 152, aspartate 153, and aspartate 184 each contribute to the Ca(2+) site. Positions 242, 244, 246, and 247 each coordinate Ca(2+). Residue glutamate 247 participates in Mg(2+) binding. N-linked (GlcNAc...) asparagine glycosylation occurs at asparagine 347. Residue glycine 362 coordinates Ca(2+). 2 N-linked (GlcNAc...) asparagine glycosylation sites follow: asparagine 460 and asparagine 479. 4 I-EGF domains span residues 465–499 (CSTG…TRCE), 500–549 (CQEG…PFCE), 550–586 (CDSF…DNCN), and 587–626 (CSTD…ETCE). The N-linked (GlcNAc...) asparagine glycan is linked to asparagine 505. N-linked (GlcNAc...) asparagine glycosylation occurs at asparagine 586. 9 disulfides stabilise this stretch: cysteine 587–cysteine 610, cysteine 594–cysteine 608, cysteine 602–cysteine 613, cysteine 615–cysteine 625, cysteine 628–cysteine 631, cysteine 635–cysteine 682, cysteine 641–cysteine 661, cysteine 644–cysteine 657, and cysteine 690–cysteine 714. N-linked (GlcNAc...) asparagine glycans are attached at residues asparagine 654 and asparagine 705. Residues 720–742 (AMTILLAVVGSILLIGMALLAIW) traverse the membrane as a helical segment. Over 743 to 798 (KLLVTIHDRREFAKFQSERSRARYEMASNPLYRKPISTHTVDFAFNKFNKSYNGSV) the chain is Cytoplasmic. Serine 770 carries the phosphoserine modification.

The protein belongs to the integrin beta chain family. Heterodimer of an alpha and a beta subunit. Beta-5 (ITGB5) associates with alpha-V (ITGAV). Interacts with MYO10. Interacts with DAB2. Integrin ITGAV:ITGB5 interacts with FBLN5 (via N-terminus). ITGAV:ITGB5 interacts with CCN3. Interacts with tensin TNS3; TNS3 also interacts with PEAK1, thus acting as an adapter molecule to bridge the association of PEAK1 with ITGB5.

It localises to the cell membrane. Its function is as follows. Integrin alpha-V/beta-5 (ITGAV:ITGB5) is a receptor for fibronectin. It recognizes the sequence R-G-D in its ligand. The chain is Integrin beta-5 (Itgb5) from Mus musculus (Mouse).